Reading from the N-terminus, the 313-residue chain is Testis-expressed protein 264 (313 aa).

The Lumenal segment spans residues 1-6; it reads MSDLLL. A helical; Signal-anchor for type III membrane protein transmembrane segment spans residues 7-31; it reads LGLIGGLTLLLLLTLLAFAGYSGLL. Residues 32 to 313 are Cytoplasmic-facing; that stretch reads AGVEVSAGSP…EPTAPEKGKE (282 aa). The interval 193–313 is disordered; that stretch reads PEMKETEWKW…EPTAPEKGKE (121 aa). Over residues 219–247 the composition is skewed to polar residues; that stretch reads DTMSDTSSVSLEVSPGSRETSAATLSPGA. Residues Ser239 and Ser244 each carry the phosphoserine modification. Positions 251–263 are enriched in basic and acidic residues; sequence GWDDGDTRSEHSY. Low complexity predominate over residues 264-273; it reads SESGASGSSF. Residues 273–276 carry the LIR motif motif; it reads FEEL.

Interacts (via the LIR motif) with ATG8 family proteins MAP1LC3A, MAP1LC3B, GABARAP and GABARAPL1. Interacts with VCP/p97; bridging VCP/p97 to covalent DNA-protein cross-links (DPCs). Interacts with TOP1 (when sumoylated).

It is found in the endoplasmic reticulum membrane. Its subcellular location is the cytoplasmic vesicle. It localises to the autophagosome. The protein resides in the cytoplasm. The protein localises to the cytosol. It is found in the nucleus. Its subcellular location is the chromosome. Functionally, major reticulophagy (also called ER-phagy) receptor that acts independently of other candidate reticulophagy receptors to remodel subdomains of the endoplasmic reticulum into autophagosomes upon nutrient stress, which then fuse with lysosomes for endoplasmic reticulum turnover. The ATG8-containing isolation membrane (IM) cradles a tubular segment of TEX264-positive ER near a three-way junction, allowing the formation of a synapse of 2 juxtaposed membranes with trans interaction between the TEX264 and ATG8 proteins. Expansion of the IM would extend the capture of ER, possibly through a 'zipper-like' process involving continued trans TEX264-ATG8 interactions, until poorly understood mechanisms lead to the fission of relevant membranes and, ultimately, autophagosomal membrane closure. Also involved in the repair of covalent DNA-protein cross-links (DPCs) during DNA synthesis: acts by bridging VCP/p97 to covalent DNA-protein cross-links (DPCs) and initiating resolution of DPCs by SPRTN. This chain is Testis-expressed protein 264, found in Homo sapiens (Human).